Reading from the N-terminus, the 163-residue chain is Probable chemoreceptor glutamine deamidase CheD (163 aa).

The protein belongs to the CheD family.

The catalysed reaction is L-glutaminyl-[protein] + H2O = L-glutamyl-[protein] + NH4(+). In terms of biological role, probably deamidates glutamine residues to glutamate on methyl-accepting chemotaxis receptors (MCPs), playing an important role in chemotaxis. The protein is Probable chemoreceptor glutamine deamidase CheD of Borrelia garinii subsp. bavariensis (strain ATCC BAA-2496 / DSM 23469 / PBi) (Borreliella bavariensis).